The following is a 245-amino-acid chain: Phosducin (245 aa).

The interval 1-67 (MEEARRQSLE…SRDDKDSKER (67 aa)) is disordered. A Phosducin domain is found at 1–241 (MEEARRQSLE…IHALEQTSME (241 aa)). Residues 58-67 (SRDDKDSKER) show a composition bias toward basic and acidic residues. Residue S73 is modified to Phosphoserine; by PKA. Residues 111–245 (YGFVYELETG…EQTSMEEDVE (135 aa)) form a thioredoxin fold region.

It belongs to the phosducin family. Forms a complex with the beta and gamma subunits of the GTP-binding protein, transducin. Interacts with CRX. Light-induced changes in cyclic nucleotide levels modulate the phosphorylation of this protein by cAMP kinase.

The protein localises to the cytoplasm. It is found in the cytosol. The protein resides in the nucleus. It localises to the cell projection. Its subcellular location is the cilium. The protein localises to the photoreceptor outer segment. It is found in the photoreceptor inner segment. Functionally, may participate in the regulation of visual phototransduction or in the integration of photoreceptor metabolism. Inhibits the transcriptional activation activity of the cone-rod homeobox CRX. The sequence is that of Phosducin (PDC) from Equus caballus (Horse).